The primary structure comprises 184 residues: Acireductone dioxygenase (184 aa).

Residues His-87, His-89, Glu-93, and His-137 each contribute to the Fe(2+) site. Residues His-87, His-89, Glu-93, and His-137 each contribute to the Ni(2+) site.

Belongs to the acireductone dioxygenase (ARD) family. The cofactor is Fe(2+). It depends on Ni(2+) as a cofactor.

The protein resides in the cytoplasm. It localises to the nucleus. The enzyme catalyses 1,2-dihydroxy-5-(methylsulfanyl)pent-1-en-3-one + O2 = 4-methylsulfanyl-2-oxobutanoate + formate + 2 H(+). The catalysed reaction is 1,2-dihydroxy-5-(methylsulfanyl)pent-1-en-3-one + O2 = 3-(methylsulfanyl)propanoate + CO + formate + 2 H(+). It functions in the pathway amino-acid biosynthesis; L-methionine biosynthesis via salvage pathway; L-methionine from S-methyl-5-thio-alpha-D-ribose 1-phosphate: step 5/6. Functionally, catalyzes 2 different reactions between oxygen and the acireductone 1,2-dihydroxy-3-keto-5-methylthiopentene (DHK-MTPene) depending upon the metal bound in the active site. Fe-containing acireductone dioxygenase (Fe-ARD) produces formate and 2-keto-4-methylthiobutyrate (KMTB), the alpha-ketoacid precursor of methionine in the methionine recycle pathway. Ni-containing acireductone dioxygenase (Ni-ARD) produces methylthiopropionate, carbon monoxide and formate, and does not lie on the methionine recycle pathway. This Ciona intestinalis (Transparent sea squirt) protein is Acireductone dioxygenase.